The primary structure comprises 417 residues: Sulfate adenylyltransferase (417 aa).

The protein belongs to the sulfate adenylyltransferase family.

It carries out the reaction sulfate + ATP + H(+) = adenosine 5'-phosphosulfate + diphosphate. The protein operates within sulfur metabolism; hydrogen sulfide biosynthesis; sulfite from sulfate: step 1/3. The polypeptide is Sulfate adenylyltransferase (Psychrobacter cryohalolentis (strain ATCC BAA-1226 / DSM 17306 / VKM B-2378 / K5)).